The chain runs to 311 residues: Ribosomal RNA small subunit methyltransferase H (311 aa).

S-adenosyl-L-methionine contacts are provided by residues 33 to 35, Asp-53, Phe-77, Asp-98, and Gln-105; that span reads GGH.

The protein belongs to the methyltransferase superfamily. RsmH family.

It is found in the cytoplasm. The enzyme catalyses cytidine(1402) in 16S rRNA + S-adenosyl-L-methionine = N(4)-methylcytidine(1402) in 16S rRNA + S-adenosyl-L-homocysteine + H(+). Its function is as follows. Specifically methylates the N4 position of cytidine in position 1402 (C1402) of 16S rRNA. The chain is Ribosomal RNA small subunit methyltransferase H from Thiobacillus denitrificans (strain ATCC 25259 / T1).